The sequence spans 266 residues: tRNA pseudouridine synthase A (266 aa).

The active-site Nucleophile is D53. Residue Y109 coordinates substrate.

It belongs to the tRNA pseudouridine synthase TruA family.

The enzyme catalyses uridine(38/39/40) in tRNA = pseudouridine(38/39/40) in tRNA. Formation of pseudouridine at positions 38, 39 and 40 in the anticodon stem and loop of transfer RNAs. The chain is tRNA pseudouridine synthase A from Methanocella arvoryzae (strain DSM 22066 / NBRC 105507 / MRE50).